Here is a 154-residue protein sequence, read N- to C-terminus: Transcriptional repressor NrdR (154 aa).

Residues 3 to 34 (CPFCGHAATQVIDTRMSEEGDTVRRRRRCESC) fold into a zinc finger. Residues 49-139 (PAVVKKNGSR…VYRSFEDLAE (91 aa)) form the ATP-cone domain.

It belongs to the NrdR family. Zn(2+) serves as cofactor.

Negatively regulates transcription of bacterial ribonucleotide reductase nrd genes and operons by binding to NrdR-boxes. This Ralstonia pickettii (strain 12J) protein is Transcriptional repressor NrdR.